The chain runs to 171 residues: Synaptonemal complex central element protein 2 (171 aa).

A disordered region spans residues 1-52 (MERHGVAAPPVELKDQEPPAIVESGEHRQSENHEETPGSVAPSASCQLPGPF). Residues 24-36 (SGEHRQSENHEET) are compositionally biased toward basic and acidic residues. 2 coiled-coil regions span residues 52-83 (FSSL…DHAL) and 118-146 (QERL…QTVE).

The protein belongs to the SYCE family. In terms of assembly, homodimer. Found in a complex with SYCP1 and SYCE1. Interacts with SYCP1 and SYCE1. Interacts with SYCE3. Interacts with TEX12. Meiotic cells (at protein level). Expressed in the ovary and testis.

The protein resides in the nucleus. Its subcellular location is the chromosome. Its function is as follows. Major component of the transverse central element of synaptonemal complexes (SCS), formed between homologous chromosomes during meiotic prophase. Requires SYCP1 in order to be incorporated into the central element. May have a role in the synaptonemal complex assembly, stabilization and recombination. The chain is Synaptonemal complex central element protein 2 (Syce2) from Mus musculus (Mouse).